A 210-amino-acid chain; its full sequence is Pyridoxine/pyridoxamine 5'-phosphate oxidase (210 aa).

Substrate contacts are provided by residues 7–10 (REDY) and lysine 65. FMN is bound by residues 60–65 (RMVLLK), 75–76 (FT), arginine 81, lysine 82, and glutamine 104. Substrate is bound by residues tyrosine 122, arginine 126, and serine 130. Residues 139–140 (QS) and tryptophan 183 contribute to the FMN site. 189-191 (RLH) contacts substrate. Arginine 193 is an FMN binding site.

It belongs to the pyridoxamine 5'-phosphate oxidase family. In terms of assembly, homodimer. Requires FMN as cofactor.

The catalysed reaction is pyridoxamine 5'-phosphate + O2 + H2O = pyridoxal 5'-phosphate + H2O2 + NH4(+). It carries out the reaction pyridoxine 5'-phosphate + O2 = pyridoxal 5'-phosphate + H2O2. It functions in the pathway cofactor metabolism; pyridoxal 5'-phosphate salvage; pyridoxal 5'-phosphate from pyridoxamine 5'-phosphate: step 1/1. Its pathway is cofactor metabolism; pyridoxal 5'-phosphate salvage; pyridoxal 5'-phosphate from pyridoxine 5'-phosphate: step 1/1. In terms of biological role, catalyzes the oxidation of either pyridoxine 5'-phosphate (PNP) or pyridoxamine 5'-phosphate (PMP) into pyridoxal 5'-phosphate (PLP). The chain is Pyridoxine/pyridoxamine 5'-phosphate oxidase from Neisseria gonorrhoeae (strain ATCC 700825 / FA 1090).